A 76-amino-acid polypeptide reads, in one-letter code: Acyl carrier protein (76 aa).

In terms of domain architecture, Carrier spans 1–76 (MSVEEKVKKI…DAIDYVSNKQ (76 aa)). Ser-36 carries the O-(pantetheine 4'-phosphoryl)serine modification.

The protein belongs to the acyl carrier protein (ACP) family. Post-translationally, 4'-phosphopantetheine is transferred from CoA to a specific serine of apo-ACP by AcpS. This modification is essential for activity because fatty acids are bound in thioester linkage to the sulfhydryl of the prosthetic group.

It localises to the cytoplasm. It participates in lipid metabolism; fatty acid biosynthesis. Its function is as follows. Carrier of the growing fatty acid chain in fatty acid biosynthesis. This Nitratidesulfovibrio vulgaris (strain ATCC 29579 / DSM 644 / CCUG 34227 / NCIMB 8303 / VKM B-1760 / Hildenborough) (Desulfovibrio vulgaris) protein is Acyl carrier protein.